The following is a 231-amino-acid chain: Deoxyribose-phosphate aldolase (231 aa).

The active-site Proton donor/acceptor is Asp-86. Residue Lys-147 is the Schiff-base intermediate with acetaldehyde of the active site. Residue Lys-172 is the Proton donor/acceptor of the active site. Positions 206–231 are disordered; that stretch reads WQAETAGETVTEPESDRDGADTTDGY.

It belongs to the DeoC/FbaB aldolase family. DeoC type 1 subfamily.

It localises to the cytoplasm. It carries out the reaction 2-deoxy-D-ribose 5-phosphate = D-glyceraldehyde 3-phosphate + acetaldehyde. Its pathway is carbohydrate degradation; 2-deoxy-D-ribose 1-phosphate degradation; D-glyceraldehyde 3-phosphate and acetaldehyde from 2-deoxy-alpha-D-ribose 1-phosphate: step 2/2. Functionally, catalyzes a reversible aldol reaction between acetaldehyde and D-glyceraldehyde 3-phosphate to generate 2-deoxy-D-ribose 5-phosphate. The polypeptide is Deoxyribose-phosphate aldolase (Haloarcula marismortui (strain ATCC 43049 / DSM 3752 / JCM 8966 / VKM B-1809) (Halobacterium marismortui)).